The following is a 291-amino-acid chain: MDITFKDVSYTYQPGTPFQGIGLKHINLTIESGSYTALIGHTGSGKSTLLQHLNALLKPTEGVVQIGERQITPETNNKNLKVIRQKVGMVFQFPESQLFEATVQKDIAFGPQNFGVPEAEALERAKAMVELVGLPEAVLEQSPFDLSGGQMRRVAIAGVLAMQPEVLILDEPTAGLDPVGRREMMGLFEKLHREQGMTIVMVTHQMDDVANYADHVVVLENGGIAKSGTPREIFADPEWLTSKQLGLPTTTQFAQALIKKGFGFPKVPLTEHELAAMLRDQLPQGAGGANE.

One can recognise an ABC transporter domain in the interval 3–246 (ITFKDVSYTY…PEWLTSKQLG (244 aa)). An ATP-binding site is contributed by 40–47 (GHTGSGKS).

The protein belongs to the ABC transporter superfamily. Energy-coupling factor EcfA family. In terms of assembly, forms a stable energy-coupling factor (ECF) transporter complex composed of 2 membrane-embedded substrate-binding proteins (S component), 2 ATP-binding proteins (A component) and 2 transmembrane proteins (T component).

The protein localises to the cell membrane. Its function is as follows. ATP-binding (A) component of a common energy-coupling factor (ECF) ABC-transporter complex. Unlike classic ABC transporters this ECF transporter provides the energy necessary to transport a number of different substrates. This Latilactobacillus sakei subsp. sakei (strain 23K) (Lactobacillus sakei subsp. sakei) protein is Energy-coupling factor transporter ATP-binding protein EcfA2.